Reading from the N-terminus, the 296-residue chain is Ribonuclease H2 subunit A (296 aa).

Residues 14 to 236 (PCLMGIDEAG…CTTHLKGEVE (223 aa)) form the RNase H type-2 domain. A divalent metal cation is bound by residues Asp20, Glu21, and Asp127.

The protein belongs to the RNase HII family. Eukaryotic subfamily. Mn(2+) serves as cofactor. Requires Mg(2+) as cofactor.

The enzyme catalyses Endonucleolytic cleavage to 5'-phosphomonoester.. Catalytic subunit of RNase HII, an endonuclease that specifically degrades the RNA of RNA:DNA hybrids. Participates in DNA replication, possibly by mediating the removal of lagging-strand Okazaki fragment RNA primers during DNA replication. Mediates the excision of single ribonucleotides from DNA:RNA duplexes. This Arabidopsis thaliana (Mouse-ear cress) protein is Ribonuclease H2 subunit A.